A 375-amino-acid chain; its full sequence is All-trans-retinol dehydrogenase [NAD(+)] ADH1B (375 aa).

At serine 2 the chain carries N-acetylserine. The residue at position 23 (serine 23) is a Phosphoserine. Tyrosine 35 carries the post-translational modification Phosphotyrosine. Residues cysteine 47, histidine 68, cysteine 98, cysteine 101, cysteine 104, cysteine 112, and cysteine 175 each coordinate Zn(2+). Residues 200-205, aspartate 224, lysine 229, 293-295, and arginine 370 each bind NAD(+); these read GLGGVG and VGV.

It belongs to the zinc-containing alcohol dehydrogenase family. As to quaternary structure, homodimer or heterodimer of closely related subunits. It depends on Zn(2+) as a cofactor. In terms of tissue distribution, expressed in liver.

It is found in the cytoplasm. It carries out the reaction all-trans-retinol + NAD(+) = all-trans-retinal + NADH + H(+). The enzyme catalyses all-trans-4-hydroxyretinol + NAD(+) = all-trans-4-hydroxyretinal + NADH + H(+). It catalyses the reaction all-trans-4-oxoretinol + NAD(+) = all-trans-4-oxoretinal + NADH + H(+). In terms of biological role, catalyzes the NAD-dependent oxidation of all-trans-retinol and its derivatives such as all-trans-4-hydroxyretinol and may participate in retinoid metabolism. In vitro can also catalyze the NADH-dependent reduction of all-trans-retinal and its derivatives such as all-trans-4-oxoretinal. Catalyzes in the oxidative direction with higher efficiency. Has the same affinity for all-trans-4-hydroxyretinol and all-trans-4-oxoretinal. The protein is All-trans-retinol dehydrogenase [NAD(+)] ADH1B of Papio hamadryas (Hamadryas baboon).